Reading from the N-terminus, the 513-residue chain is ATP synthase subunit alpha (513 aa).

Residue 169–176 participates in ATP binding; the sequence is GDRQTGKT.

This sequence belongs to the ATPase alpha/beta chains family. In terms of assembly, F-type ATPases have 2 components, CF(1) - the catalytic core - and CF(0) - the membrane proton channel. CF(1) has five subunits: alpha(3), beta(3), gamma(1), delta(1), epsilon(1). CF(0) has three main subunits: a(1), b(2) and c(9-12). The alpha and beta chains form an alternating ring which encloses part of the gamma chain. CF(1) is attached to CF(0) by a central stalk formed by the gamma and epsilon chains, while a peripheral stalk is formed by the delta and b chains.

The protein resides in the cell inner membrane. The catalysed reaction is ATP + H2O + 4 H(+)(in) = ADP + phosphate + 5 H(+)(out). Its function is as follows. Produces ATP from ADP in the presence of a proton gradient across the membrane. The alpha chain is a regulatory subunit. The polypeptide is ATP synthase subunit alpha (Polynucleobacter necessarius subsp. necessarius (strain STIR1)).